Reading from the N-terminus, the 448-residue chain is NADP-specific glutamate dehydrogenase (448 aa).

3 residues coordinate substrate: Lys-88, Gln-109, and Lys-112. Residue Lys-124 is the Proton donor of the active site. Gly-163 contributes to the substrate binding site. 2 residues coordinate NADP(+): Thr-207 and Asn-238. Ser-381 is a binding site for substrate.

It belongs to the Glu/Leu/Phe/Val dehydrogenases family. In terms of assembly, homohexamer.

It carries out the reaction L-glutamate + NADP(+) + H2O = 2-oxoglutarate + NH4(+) + NADPH + H(+). Its function is as follows. Catalyzes the reversible oxidative deamination of glutamate to alpha-ketoglutarate and ammonia. This chain is NADP-specific glutamate dehydrogenase (gdhA), found in Helicobacter pylori (strain ATCC 700392 / 26695) (Campylobacter pylori).